Here is a 408-residue protein sequence, read N- to C-terminus: Bifunctional polynucleotide phosphatase/kinase (408 aa).

A disordered region spans residues 1 to 38 (MSSKKRKSPPQESLTSYFEKSSKSSKKYGSQNKDSDSS). A Phosphoserine modification is found at Ser-8. Polar residues-rich tracts occupy residues 10–19 (PQESLTSYFE) and 28–38 (YGSQNKDSDSS). 263 to 270 (GFPSSGKS) contacts ATP.

It in the N-terminal section; belongs to the DNA 3' phosphatase family.

It is found in the nucleus. The enzyme catalyses a 3'end (2'-deoxyribonucleotide 3'-phosphate)-DNA + H2O = a 3'-end 2'-deoxyribonucleotide-DNA + phosphate. The catalysed reaction is a 5'-end dephospho-2'-deoxyribonucleoside-DNA + ATP = a 5'-end 5'-phospho-2'-deoxyribonucleoside-DNA + ADP + H(+). Its function is as follows. Catalyzes the phosphorylation of DNA at 5'-hydroxyl termini and can dephosphorylate its 3'-phosphate termini. Has a role in the repair of breaks in single-stranded DNA. This is Bifunctional polynucleotide phosphatase/kinase (pnk1) from Schizosaccharomyces pombe (strain 972 / ATCC 24843) (Fission yeast).